A 24-amino-acid chain; its full sequence is Lectin (24 aa).

Belongs to the leguminous lectin family. Homotetramer.

Its function is as follows. Agglutinates erythrocytes of blood group A. Binds in decreasing order of affinity: N-acetyl-D-galactosamine, D-galactose, and D-galactosamine. This Crotalaria pallida (Smooth rattlebox) protein is Lectin.